Consider the following 299-residue polypeptide: Regucalcin (299 aa).

A divalent metal cation is bound at residue Glu18. Residues Arg101, Asn103, and Glu121 each contribute to the substrate site. N6-succinyllysine is present on Lys144. 2 residues coordinate a divalent metal cation: Asn154 and Asp204. Asp204 functions as the Proton donor/acceptor in the catalytic mechanism. Residues Lys244 and Lys253 each carry the N6-succinyllysine modification.

This sequence belongs to the SMP-30/CGR1 family. Monomer. Zn(2+) is required as a cofactor. Mn(2+) serves as cofactor. The cofactor is Ca(2+). Requires Mg(2+) as cofactor.

Its subcellular location is the cytoplasm. It carries out the reaction D-glucono-1,5-lactone + H2O = D-gluconate + H(+). Its function is as follows. Gluconolactonase with low activity towards other sugar lactones, including gulonolactone and galactonolactone. Can also hydrolyze diisopropyl phosphorofluoridate and phenylacetate (in vitro). Calcium-binding protein. Modulates Ca(2+) signaling, and Ca(2+)-dependent cellular processes and enzyme activities. The chain is Regucalcin (RGN) from Homo sapiens (Human).